The following is a 290-amino-acid chain: MGTPEFPNLGKHCSVGDCNQIDFLPFTCDRCDHVFCLQHRSYTSHQCPNANQKDVTVLICPLCAKGVRLNPNEDPNITWDTHVNSDCDPSNYQKVTKKKKCPVPGCRETLTFSNTIRCKDCTKEHCLKHRFGPDHKCPGPRKPESTFPFGNMLRRSQKAESCSNSNSSSTSSSWWSSSLLTAATSFKSSAEAGMQKLSTATTQAIQKAKDGISTSSSNSGDLVEQCVQCPARFSTVGALIEHCEKSHQSNSQSSRSRVTVDVCPKCSKAFRDPVLLVEHVERDHGGTSRA.

2 AN1-type zinc fingers span residues 7 to 55 and 95 to 145; these read PNLG…QKDV and VTKK…KPES. Positions 13, 18, 28, 31, 36, 39, 45, 47, 101, 106, 118, 121, 126, 129, 135, and 137 each coordinate Zn(2+). C2H2-type zinc fingers lie at residues 224 to 247 and 261 to 284; these read EQCV…EKSH and DVCP…ERDH.

May be involved in environmental stress response. In Oryza sativa subsp. japonica (Rice), this protein is Zinc finger AN1 and C2H2 domain-containing stress-associated protein 16 (SAP16).